A 367-amino-acid polypeptide reads, in one-letter code: Histidinol-phosphate aminotransferase (367 aa).

Lysine 221 is subject to N6-(pyridoxal phosphate)lysine.

This sequence belongs to the class-II pyridoxal-phosphate-dependent aminotransferase family. Histidinol-phosphate aminotransferase subfamily. Homodimer. Pyridoxal 5'-phosphate serves as cofactor.

The enzyme catalyses L-histidinol phosphate + 2-oxoglutarate = 3-(imidazol-4-yl)-2-oxopropyl phosphate + L-glutamate. The protein operates within amino-acid biosynthesis; L-histidine biosynthesis; L-histidine from 5-phospho-alpha-D-ribose 1-diphosphate: step 7/9. In Erythrobacter litoralis (strain HTCC2594), this protein is Histidinol-phosphate aminotransferase.